Consider the following 457-residue polypeptide: tRNA-2-methylthio-N(6)-dimethylallyladenosine synthase (457 aa).

One can recognise an MTTase N-terminal domain in the interval 8–123 (KKVFIKTFGC…LPEMLARRDA (116 aa)). [4Fe-4S] cluster-binding residues include C17, C54, C86, C160, C164, and C167. A Radical SAM core domain is found at 146–379 (RVDGATAFVS…QEAIEANGRR (234 aa)). One can recognise a TRAM domain in the interval 382 to 449 (QSRVGTVQRI…PHSLRGEVLL (68 aa)).

Belongs to the methylthiotransferase family. MiaB subfamily. In terms of assembly, monomer. [4Fe-4S] cluster is required as a cofactor.

The protein resides in the cytoplasm. The catalysed reaction is N(6)-dimethylallyladenosine(37) in tRNA + (sulfur carrier)-SH + AH2 + 2 S-adenosyl-L-methionine = 2-methylsulfanyl-N(6)-dimethylallyladenosine(37) in tRNA + (sulfur carrier)-H + 5'-deoxyadenosine + L-methionine + A + S-adenosyl-L-homocysteine + 2 H(+). Functionally, catalyzes the methylthiolation of N6-(dimethylallyl)adenosine (i(6)A), leading to the formation of 2-methylthio-N6-(dimethylallyl)adenosine (ms(2)i(6)A) at position 37 in tRNAs that read codons beginning with uridine. The chain is tRNA-2-methylthio-N(6)-dimethylallyladenosine synthase from Methylibium petroleiphilum (strain ATCC BAA-1232 / LMG 22953 / PM1).